Here is a 125-residue protein sequence, read N- to C-terminus: Phosphoribosyl-AMP cyclohydrolase (125 aa).

Residue Asp-91 coordinates Mg(2+). Cys-92 serves as a coordination point for Zn(2+). Residues Asp-93 and Asp-95 each contribute to the Mg(2+) site. Residues Cys-108 and Cys-115 each contribute to the Zn(2+) site.

This sequence belongs to the PRA-CH family. Homodimer. Requires Mg(2+) as cofactor. Zn(2+) is required as a cofactor.

Its subcellular location is the cytoplasm. The enzyme catalyses 1-(5-phospho-beta-D-ribosyl)-5'-AMP + H2O = 1-(5-phospho-beta-D-ribosyl)-5-[(5-phospho-beta-D-ribosylamino)methylideneamino]imidazole-4-carboxamide. It participates in amino-acid biosynthesis; L-histidine biosynthesis; L-histidine from 5-phospho-alpha-D-ribose 1-diphosphate: step 3/9. Catalyzes the hydrolysis of the adenine ring of phosphoribosyl-AMP. The protein is Phosphoribosyl-AMP cyclohydrolase of Streptomyces griseus subsp. griseus (strain JCM 4626 / CBS 651.72 / NBRC 13350 / KCC S-0626 / ISP 5235).